A 562-amino-acid polypeptide reads, in one-letter code: MQFDYIIIGAGSAGNVLATRLTEDPNTTVLLLEAGGPDYRFDFRTQMPAALAFPLQGKRYNWAYETEPEPFMNNRRMECGRGKGLGGSSLINGMCYIRGNALDLDNWAQEPGLENWSYLDCLPYYRKAETRDVGENDYHGGDGPVSVTTSKPGVNPLFEAMIEAGVQAGYPRTDDLNGYQQEGFGPMDRTVTPHGRRASTARGYLDQAKSRSNLTIRTHAMTDHIIFDGKRAVGVEWLEGDSTIPTRAAANKEVLLCAGAIASPQILQRSGVGNAGLLAEFDIPLVHELPGVGENLQDHLEMYLQYECKEPVSLYPALQWWNQPKIGAEWLFGGTGIGASNHFEAGGFIRSREEFAWPNIQYHFLPVAINYNGSNAVKEHGFQCHVGSMRSPSRGHVRIKSRAPHQHPAILFNYMSHEQDWQEFRDAIRITREIMHQPALDQYHGREISPGVECQTDEQLDEFVRNHAETAFHPCGTCKMGYDEMSVVDGEGRVHGLEGLRVVDASIMPQIITGNLNATTIMIGEKMADMIRGKDALPRSTAGYYVANGMPVRAKKMSRDVN.

4-33 (DYIIIGAGSAGNVLATRLTEDPNTTVLLLE) lines the FAD pocket. His473 acts as the Proton acceptor in catalysis.

Belongs to the GMC oxidoreductase family. FAD is required as a cofactor.

It carries out the reaction choline + A = betaine aldehyde + AH2. It catalyses the reaction betaine aldehyde + NAD(+) + H2O = glycine betaine + NADH + 2 H(+). It participates in amine and polyamine biosynthesis; betaine biosynthesis via choline pathway; betaine aldehyde from choline (cytochrome c reductase route): step 1/1. Its function is as follows. Involved in the biosynthesis of the osmoprotectant glycine betaine. Catalyzes the oxidation of choline to betaine aldehyde and betaine aldehyde to glycine betaine at the same rate. The polypeptide is Oxygen-dependent choline dehydrogenase (Escherichia coli (strain SMS-3-5 / SECEC)).